Consider the following 94-residue polypeptide: Large ribosomal subunit protein bL27 (94 aa).

The propeptide occupies 1–9 (MLELNLQLF). The interval 12 to 33 (KKGGGSTSNGRDSQAKRLGAKA) is disordered.

The protein belongs to the bacterial ribosomal protein bL27 family. In terms of processing, the N-terminus is cleaved by ribosomal processing cysteine protease Prp.

The chain is Large ribosomal subunit protein bL27 from Lactococcus lactis subsp. cremoris (strain MG1363).